A 376-amino-acid chain; its full sequence is Succinyl-diaminopimelate desuccinylase (376 aa).

His66 is a Zn(2+) binding site. Asp68 is a catalytic residue. Zn(2+) is bound at residue Asp99. The active-site Proton acceptor is Glu133. 3 residues coordinate Zn(2+): Glu134, Glu162, and His348.

The protein belongs to the peptidase M20A family. DapE subfamily. As to quaternary structure, homodimer. The cofactor is Zn(2+). Co(2+) serves as cofactor.

The catalysed reaction is N-succinyl-(2S,6S)-2,6-diaminopimelate + H2O = (2S,6S)-2,6-diaminopimelate + succinate. Its pathway is amino-acid biosynthesis; L-lysine biosynthesis via DAP pathway; LL-2,6-diaminopimelate from (S)-tetrahydrodipicolinate (succinylase route): step 3/3. Its function is as follows. Catalyzes the hydrolysis of N-succinyl-L,L-diaminopimelic acid (SDAP), forming succinate and LL-2,6-diaminopimelate (DAP), an intermediate involved in the bacterial biosynthesis of lysine and meso-diaminopimelic acid, an essential component of bacterial cell walls. This Xanthomonas euvesicatoria pv. vesicatoria (strain 85-10) (Xanthomonas campestris pv. vesicatoria) protein is Succinyl-diaminopimelate desuccinylase.